Here is a 369-residue protein sequence, read N- to C-terminus: Flagellar P-ring protein (369 aa).

The signal sequence occupies residues 1-24; it reads MSKTISLLKFIICILISLCSFTYA.

This sequence belongs to the FlgI family. In terms of assembly, the basal body constitutes a major portion of the flagellar organelle and consists of four rings (L,P,S, and M) mounted on a central rod.

It localises to the bacterial flagellum basal body. Assembles around the rod to form the L-ring and probably protects the motor/basal body from shearing forces during rotation. The chain is Flagellar P-ring protein from Buchnera aphidicola subsp. Schizaphis graminum (strain Sg).